Here is a 1141-residue protein sequence, read N- to C-terminus: Serine-aspartate repeat-containing protein E (1141 aa).

A signal peptide spans 1-52; it reads MINRDNKKAITKKGMISNRLNKFSIRKYTVGTASILVGTTLIFGLGNQEAKA. The YSIRK-G/S signaling motif signature appears at 23–34; it reads FSIRKYTVGTAS. The ligand binding A region stretch occupies residues 53-601; sequence AENTSTENAK…GDGTVKPEEK (549 aa). The disordered stretch occupies residues 54 to 225; it reads ENTSTENAKQ…SKEELKNNPE (172 aa). Positions 61 to 75 are enriched in basic and acidic residues; sequence AKQDDATTSDNKEVV. A compositionally biased stretch (low complexity) spans 77-90; sequence EAENNSTTENDSTN. Positions 92–109 are enriched in basic and acidic residues; that stretch reads IKKETNTDSQPEAKEEST. Over residues 110-126 the composition is skewed to low complexity; that stretch reads KSSTQQQQNNVTATTET. The span at 130–145 shows a compositional bias: basic and acidic residues; it reads NIEKENVKPSTDKTAT. A compositionally biased stretch (polar residues) spans 158-207; it reads PNNTNNDVTTKPSTSEIQTKPTTPQESTNIENSQPQPTPSKVDNQVTDAT. Basic and acidic residues predominate over residues 216-225; that stretch reads SKEELKNNPE. 3 CNA-B domains span residues 602–714, 715–824, and 825–935; these read LYKI…YKEP, KYNL…YKTP, and KYSL…EEDT. The tract at residues 899–1117 is disordered; the sequence is VTNTTEDDKD…GSENNGSNNA (219 aa). Composition is skewed to acidic residues over residues 903-913 and 930-1080; these read TEDDKDADGGE and YFEE…DSDS. The LPXTG sorting signal motif lies at 1104–1108; sequence LPETG. T1107 is modified (pentaglycyl murein peptidoglycan amidated threonine). A propeptide spans 1108–1141 (removed by sortase); the sequence is GSENNGSNNATLFGGLFAALGSLLLFGRRKKQNK.

The protein belongs to the serine-aspartate repeat-containing protein (SDr) family. Interacts with host complement factor H/CFAH (via C-terminus). Interacts with host complement regulator C4BPA.

The protein resides in the secreted. The protein localises to the cell wall. In terms of biological role, cell surface-associated calcium-binding protein which plays an important role in adhesion and pathogenesis. Contributes to the resistance to killing by innate immune components in blood and thus attenuates bacterial clearance by interacting with host complement factor H/CFAH and modulating its activity. Also inhibits bacterial opsonization and killing by interacting with host complement regulator C4BPA and thus inhibiting classical complement pathway activation. This is Serine-aspartate repeat-containing protein E (sdrE) from Staphylococcus aureus (strain MSSA476).